Consider the following 605-residue polypeptide: Elongation factor 4 (605 aa).

In terms of domain architecture, tr-type G spans Ser9–Lys192. GTP-binding positions include Asp21 to Thr26 and Asn139 to Asp142.

The protein belongs to the TRAFAC class translation factor GTPase superfamily. Classic translation factor GTPase family. LepA subfamily.

The protein localises to the cell inner membrane. The enzyme catalyses GTP + H2O = GDP + phosphate + H(+). Its function is as follows. Required for accurate and efficient protein synthesis under certain stress conditions. May act as a fidelity factor of the translation reaction, by catalyzing a one-codon backward translocation of tRNAs on improperly translocated ribosomes. Back-translocation proceeds from a post-translocation (POST) complex to a pre-translocation (PRE) complex, thus giving elongation factor G a second chance to translocate the tRNAs correctly. Binds to ribosomes in a GTP-dependent manner. The protein is Elongation factor 4 of Chlorobium limicola (strain DSM 245 / NBRC 103803 / 6330).